Here is a 237-residue protein sequence, read N- to C-terminus: (5-formylfuran-3-yl)methyl phosphate synthase (237 aa).

Lysine 27 (schiff-base intermediate with substrate) is an active-site residue. Lysine 85 (proton acceptor) is an active-site residue.

Belongs to the MfnB family.

The enzyme catalyses 2 D-glyceraldehyde 3-phosphate = 4-(hydroxymethyl)-2-furancarboxaldehyde phosphate + phosphate + 2 H2O. It functions in the pathway cofactor biosynthesis; methanofuran biosynthesis. Its function is as follows. Catalyzes the formation of 4-(hydroxymethyl)-2-furancarboxaldehyde phosphate (4-HFC-P) from two molecules of glyceraldehyde-3-P (GA-3-P). In Methanobrevibacter smithii (strain ATCC 35061 / DSM 861 / OCM 144 / PS), this protein is (5-formylfuran-3-yl)methyl phosphate synthase.